Reading from the N-terminus, the 875-residue chain is Phosphatidylinositol 3-kinase VPS34 (875 aa).

The C2 PI3K-type domain maps to 14 to 188; the sequence is LDVPLKVKIK…WLDEITISKL (175 aa). A PIK helical domain is found at 293 to 526; that stretch reads LDKQVKPDIK…SSFWSRLDKK (234 aa). Residues 593–859 form the PI3K/PI4K catalytic domain; it reads CPETSKVFKS…LINDSVNALL (267 aa). A G-loop region spans residues 599-605; that stretch reads VFKSSLS. The catalytic loop stretch occupies residues 728 to 736; the sequence is GVGDRHLDN. The tract at residues 747-768 is activation loop; that stretch reads HADFGYILGQDPKPFPPLMKLP.

This sequence belongs to the PI3/PI4-kinase family. In terms of assembly, component of the autophagy-specific VPS34 PI3-kinase complex I composed of VPS15, VPS30, VPS34, ATG14 and ATG38, and of the VPS34 PI3-kinase complex II composed of VPS15, VPS30, VPS34 and VPS38. Interacts directly with ATG38. Interacts directly with VPS34. Autophosphorylated. Might also be phosphorylated by VPS15.

Its subcellular location is the golgi apparatus. It localises to the trans-Golgi network membrane. It is found in the endosome membrane. It carries out the reaction a 1,2-diacyl-sn-glycero-3-phospho-(1D-myo-inositol) + ATP = a 1,2-diacyl-sn-glycero-3-phospho-(1D-myo-inositol-3-phosphate) + ADP + H(+). Phosphatidylinositol 3-kinase activity is directly dependent on VPS15 protein kinase activity. Phosphatidylinositol 3-kinase required for cytoplasm to vacuole transport (Cvt) and autophagy as a part of the autophagy-specific VPS34 PI3-kinase complex I. This complex is essential to recruit the ATG8-phosphatidylinositol conjugate and the ATG12-ATG5 conjugate to the pre-autophagosomal structure. Also involved in endosome-to-Golgi retrograde transport as part of the VPS34 PI3-kinase complex II. This second complex is required for the endosome-to-Golgi retrieval of PEP1 and KEX2, and the recruitment of VPS5 and VPS7, two components of the retromer complex, to endosomal membranes (probably through the synthesis of a specific pool of phosphatidylinositol 3-phosphate recruiting the retromer to the endosomes). Its activation by VPS15 may lead to the phosphorylation of phosphatidylinositol in the sorting compartment membrane. Finally, it might also be involved in ethanol tolerance and cell wall integrity. The protein is Phosphatidylinositol 3-kinase VPS34 (VPS34) of Saccharomyces cerevisiae (strain ATCC 204508 / S288c) (Baker's yeast).